Here is a 312-residue protein sequence, read N- to C-terminus: D-alanine--D-alanine ligase (312 aa).

Residues 103–303 form the ATP-grasp domain; sequence KQQLVPHGIR…YADLVQAIVD (201 aa). 130–186 contributes to the ATP binding site; it reads MPRPYVLKPVNEGSSVGVAIIKERDNHGVPIHRDSHGPWQTFATLLAEPFIRGRELT. Mg(2+) is bound by residues Asp-254, Glu-270, and Asn-272.

The protein belongs to the D-alanine--D-alanine ligase family. Requires Mg(2+) as cofactor. Mn(2+) is required as a cofactor.

Its subcellular location is the cytoplasm. The catalysed reaction is 2 D-alanine + ATP = D-alanyl-D-alanine + ADP + phosphate + H(+). The protein operates within cell wall biogenesis; peptidoglycan biosynthesis. Its function is as follows. Cell wall formation. The protein is D-alanine--D-alanine ligase of Rhizorhabdus wittichii (strain DSM 6014 / CCUG 31198 / JCM 15750 / NBRC 105917 / EY 4224 / RW1) (Sphingomonas wittichii).